Here is a 270-residue protein sequence, read N- to C-terminus: 4-hydroxy-tetrahydrodipicolinate reductase (270 aa).

Residues Gly8–Met13, Asp34, Gly102–Thr104, and Ser128–Tyr131 contribute to the NAD(+) site. The active-site Proton donor/acceptor is the His160. His161 contributes to the (S)-2,3,4,5-tetrahydrodipicolinate binding site. The active-site Proton donor is the Lys164. Gly170–Thr171 serves as a coordination point for (S)-2,3,4,5-tetrahydrodipicolinate.

This sequence belongs to the DapB family.

It localises to the cytoplasm. It carries out the reaction (S)-2,3,4,5-tetrahydrodipicolinate + NAD(+) + H2O = (2S,4S)-4-hydroxy-2,3,4,5-tetrahydrodipicolinate + NADH + H(+). The enzyme catalyses (S)-2,3,4,5-tetrahydrodipicolinate + NADP(+) + H2O = (2S,4S)-4-hydroxy-2,3,4,5-tetrahydrodipicolinate + NADPH + H(+). Its pathway is amino-acid biosynthesis; L-lysine biosynthesis via DAP pathway; (S)-tetrahydrodipicolinate from L-aspartate: step 4/4. Catalyzes the conversion of 4-hydroxy-tetrahydrodipicolinate (HTPA) to tetrahydrodipicolinate. This chain is 4-hydroxy-tetrahydrodipicolinate reductase, found in Methanococcus maripaludis (strain C6 / ATCC BAA-1332).